We begin with the raw amino-acid sequence, 54 residues long: MASNDVRPVIKLRSTAGTGHTYVTRKNRRNDPDRMRLRKYDPVIRAHVEYREER.

It belongs to the bacterial ribosomal protein bL33 family.

This chain is Large ribosomal subunit protein bL33A, found in Saccharopolyspora erythraea (strain ATCC 11635 / DSM 40517 / JCM 4748 / NBRC 13426 / NCIMB 8594 / NRRL 2338).